Here is a 219-residue protein sequence, read N- to C-terminus: Ribose-5-phosphate isomerase A (219 aa).

Substrate is bound by residues Ser-28–Thr-31, Asp-81–Asp-84, and Lys-94–Gly-97. Catalysis depends on Glu-103, which acts as the Proton acceptor. Lys-121 is a binding site for substrate.

The protein belongs to the ribose 5-phosphate isomerase family. Homodimer.

It carries out the reaction aldehydo-D-ribose 5-phosphate = D-ribulose 5-phosphate. It functions in the pathway carbohydrate degradation; pentose phosphate pathway; D-ribose 5-phosphate from D-ribulose 5-phosphate (non-oxidative stage): step 1/1. Its function is as follows. Catalyzes the reversible conversion of ribose-5-phosphate to ribulose 5-phosphate. In Haemophilus influenzae (strain 86-028NP), this protein is Ribose-5-phosphate isomerase A.